The primary structure comprises 280 residues: Putative protein-tyrosine sulfotransferase (280 aa).

16–20 is a binding site for 3'-phosphoadenylyl sulfate; it reads RSGTT. The cysteines at positions 34 and 89 are disulfide-linked. Catalysis depends on E37, which acts as the Proton donor/acceptor. N57 is a glycosylation site (N-linked (GlcNAc...) asparagine). 3'-phosphoadenylyl sulfate contacts are provided by R116, S124, and R128. A glycan (N-linked (GlcNAc...) asparagine) is linked at N136. An intrachain disulfide couples C158 to C165. 3'-phosphoadenylyl sulfate contacts are provided by residues Y170 and 215–224; that span reads SASQVKNSIN.

This sequence belongs to the protein sulfotransferase family.

It catalyses the reaction L-tyrosyl-[protein] + 3'-phosphoadenylyl sulfate = O-sulfo-L-tyrosine-[protein] + adenosine 3',5'-bisphosphate + H(+). Catalyzes the O-sulfation of tyrosine residues within acidic motifs of polypeptides, using 3'-phosphoadenylyl sulfate (PAPS) as cosubstrate. In Caenorhabditis briggsae, this protein is Putative protein-tyrosine sulfotransferase.